The following is a 208-amino-acid chain: MARYIGPKCKLSRREGTDLQLKSGVKPFDVKTKKANKAPGQHGQARGGKQSEYSLQLREKQKVRRIYGVLERQFSNYYKEAARVKGATGENLLKLLESRLDNVVYRMGFGSTRAEARQLVSHRSITLNGRRVNIASIQVKAGDVIAVHEGAKQQLRIKNAIELAAQRGIPAWIEVDHSKLEGTFKAAPDRSDLPAEINESLIVELYSK.

Positions 24–52 (GVKPFDVKTKKANKAPGQHGQARGGKQSE) are disordered. An S4 RNA-binding domain is found at 98–160 (SRLDNVVYRM…AKQQLRIKNA (63 aa)).

Belongs to the universal ribosomal protein uS4 family. Part of the 30S ribosomal subunit. Contacts protein S5. The interaction surface between S4 and S5 is involved in control of translational fidelity.

In terms of biological role, one of the primary rRNA binding proteins, it binds directly to 16S rRNA where it nucleates assembly of the body of the 30S subunit. With S5 and S12 plays an important role in translational accuracy. The chain is Small ribosomal subunit protein uS4 from Acinetobacter baumannii (strain ATCC 17978 / DSM 105126 / CIP 53.77 / LMG 1025 / NCDC KC755 / 5377).